Reading from the N-terminus, the 421-residue chain is Zinc metalloproteinase-disintegrin-like lachestatin-1 (421 aa).

One can recognise a Peptidase M12B domain in the interval 10 to 206; the sequence is KYVKLVLVAD…DMPQCILEKP (197 aa). Disulfide bonds link C121–C201, C161–C185, and C163–C168. H146 serves as a coordination point for Zn(2+). E147 is an active-site residue. Residues H150 and H156 each contribute to the Zn(2+) site. A Disintegrin domain is found at 214 to 299; that stretch reads PPVCGNYFVE…AECTDRFQRN (86 aa). Residues V216, N219, F221, E223, E226, and D229 each coordinate Ca(2+). Disulfide bonds link C217/C246, C228/C241, C230/C236, C240/C263, C254/C260, C259/C285, C272/C292, C279/C310, C303/C315, C322/C372, C337/C383, C350/C360, C367/C409, and C403/C414. A D/ECD-tripeptide motif is present at residues 278–280; the sequence is ECD. Residues D280, M281, D283, D294, and R295 each coordinate Ca(2+). N-linked (GlcNAc...) asparagine glycosylation is present at N312.

Belongs to the venom metalloproteinase (M12B) family. P-III subfamily. P-IIIc sub-subfamily. In terms of assembly, homodimer; disulfide-linked. It depends on Zn(2+) as a cofactor. Expressed by the venom gland.

The protein resides in the secreted. Functionally, snake venom zinc metalloprotease that induces apoptosis in vascular endothelial cells (VEC), without degrading the extracellular matrix (it cannot cleave collagen) or inhibiting adhesion of VEC. Has also fibrinogenolytic and hemorrhagic activities. The protein is Zinc metalloproteinase-disintegrin-like lachestatin-1 of Lachesis muta rhombeata (Bushmaster).